Here is a 588-residue protein sequence, read N- to C-terminus: Succinate dehydrogenase flavoprotein subunit (588 aa).

Residues 14-19 (GAGGAG), 37-52 (SKVF…AQGG), and Asp-221 contribute to the FAD site. The residue at position 45 (His-45) is a Tele-8alpha-FAD histidine. 2 residues coordinate substrate: His-242 and Thr-254. Lys-267 is subject to N6-acetyllysine. The active-site Proton acceptor is Arg-286. His-354 is a substrate binding site. Glu-388 provides a ligand contact to FAD. Position 399 (Arg-399) interacts with substrate. 404–405 (SL) is an FAD binding site.

It belongs to the FAD-dependent oxidoreductase 2 family. FRD/SDH subfamily. Part of an enzyme complex containing four subunits: a flavoprotein, an iron-sulfur, cytochrome b-556, and a hydrophobic anchor protein. The complex forms trimers. FAD is required as a cofactor.

Its subcellular location is the cell inner membrane. It catalyses the reaction a quinone + succinate = fumarate + a quinol. The protein operates within carbohydrate metabolism; tricarboxylic acid cycle; fumarate from succinate (bacterial route): step 1/1. Its function is as follows. Two distinct, membrane-bound, FAD-containing enzymes are responsible for the catalysis of fumarate and succinate interconversion; the fumarate reductase is used in anaerobic growth, and the succinate dehydrogenase is used in aerobic growth. This Escherichia coli O157:H7 protein is Succinate dehydrogenase flavoprotein subunit (sdhA).